Reading from the N-terminus, the 444-residue chain is Transcriptional coactivator nsrH (444 aa).

Residues 74-144 form the HTH iclR-type domain; that stretch reads ASQVSEILAC…ERDHVAHTPL (71 aa). Positions 104 to 123 form a DNA-binding region, H-T-H motif; it reads IKDIADLTNVPESRLRRIIR.

Its subcellular location is the nucleus. In terms of biological role, transcriptional coactivator; part of the gene cluster that mediates the biosynthesis of the tetrahydroxanthone dimer neosartorin, which exhibits antibacterial activity. The protein is Transcriptional coactivator nsrH of Aspergillus novofumigatus (strain IBT 16806).